Reading from the N-terminus, the 752-residue chain is Sialidase 85-1.1 (752 aa).

The N-terminal stretch at 1–23 is a signal peptide; that stretch reads MSRRVFASAVLLLIVVTMCCGGA. 2 BNR repeats span residues 274–285 and 319–330; these read IYSKDNGSTWSL and YVSRDMGTTWTE. The disordered stretch occupies residues 693–725; it reads APEPQVKIAPKPAAPAAPAGNEETARETGDGGA. The span at 701–711 shows a compositional bias: low complexity; the sequence is APKPAAPAAPA.

The protein belongs to the glycosyl hydrolase 33 family.

It catalyses the reaction Hydrolysis of alpha-(2-&gt;3)-, alpha-(2-&gt;6)-, alpha-(2-&gt;8)- glycosidic linkages of terminal sialic acid residues in oligosaccharides, glycoproteins, glycolipids, colominic acid and synthetic substrates.. Functionally, developmentally regulated neuraminidase implicated in parasite invasion of cells. May contribute to the pathology during T.cruzi infection by cleaving sialic acid from cells of the immune system. This Trypanosoma cruzi protein is Sialidase 85-1.1 (SA85-1.1).